Here is a 244-residue protein sequence, read N- to C-terminus: Phosphate propanoyltransferase (244 aa).

52–54 (ISA) contributes to the CoA binding site. Residues H56 and H58 each contribute to the Zn(2+) site. R106 lines the CoA pocket. R112 lines the phosphate pocket. The Zn(2+) site is built by E118, H166, H168, and H214. N221 serves as a coordination point for CoA.

It belongs to the PduL family. Full-length protein forms large oligomers. Possible homotrimer and monomer, when purified in the absence of the encapsulation peptide (EP, residues 1-20). The EP may influence oligomerization. Zn(2+) serves as cofactor.

Its subcellular location is the bacterial microcompartment. It catalyses the reaction propanoyl-CoA + phosphate = propanoyl phosphate + CoA. Functionally, part of a bacterial microcompartment (BMC) locus required for growth on plant and algal sugars, including L-fucose and L-rhamnose. Thought to be active on lactyl-CoA in a lactaldehyde-degradation pathway. CoA is regenerated within the BMC via this enzyme, although there must also be cofactor transport across the BMC. Directly targeted to the BMC. This is Phosphate propanoyltransferase from Planctopirus limnophila (strain ATCC 43296 / DSM 3776 / IFAM 1008 / Mu 290) (Planctomyces limnophilus).